The sequence spans 444 residues: MSQTHINVIGAGLAGSEAAYQIAKRGIPVKLYEMRGVKPTPQHKTDKFAELVCSNSFRGDSLTNAVGLLKEEMRRLDSIIMRAGEAHRVPAGGAMAMDRENFSQAVTDEIHNHPLIEVIRGEITEIPEDAITVIATGPLTSDALAEKIHALNGGDGFYFYDAAAPIVDSSTINMDLVYLKSRYDKGEAAYLNAPMNKEQFNAFYEALISAEEAPLNSFEKEKYFEGCMPIEVMAKRGIKTMLYGPMKPVGLEYPEDYKGPRDGEYKTPYAVVQLRQDNAAGSLYNIVGFQTHLKWGEQKRIFQMIPGLENAEFVRYGVMHRNSYMDSPNLLEQTFATKKNPNLFFAGQMTGVEGYVESAASGLVAGINAVRRFHGEEPVIFPQTTAIGALPFYITHTESKHFQPMNVNFGIIKELDGPRIRDKKERYEAIAERSLKDLEEFLTV.

Residue Gly10–Gly15 participates in FAD binding.

Belongs to the MnmG family. TrmFO subfamily. FAD serves as cofactor.

Its subcellular location is the cytoplasm. The enzyme catalyses uridine(54) in tRNA + (6R)-5,10-methylene-5,6,7,8-tetrahydrofolate + NADH + H(+) = 5-methyluridine(54) in tRNA + (6S)-5,6,7,8-tetrahydrofolate + NAD(+). The catalysed reaction is uridine(54) in tRNA + (6R)-5,10-methylene-5,6,7,8-tetrahydrofolate + NADPH + H(+) = 5-methyluridine(54) in tRNA + (6S)-5,6,7,8-tetrahydrofolate + NADP(+). Its function is as follows. Catalyzes the folate-dependent formation of 5-methyl-uridine at position 54 (M-5-U54) in all tRNAs. The polypeptide is Methylenetetrahydrofolate--tRNA-(uracil-5-)-methyltransferase TrmFO (Streptococcus suis (strain 98HAH33)).